The following is a 526-amino-acid chain: Delayed-rectifier potassium channel regulatory subunit KCNS1 (526 aa).

The Cytoplasmic portion of the chain corresponds to 1-217 (MLMLLVRGTH…LTMENPGYSL (217 aa)). The chain crosses the membrane as a helical span at residues 218-239 (PSKLFSCVSISVVLASIAAMCI). At 240-270 (HSLPEYQAREAAAAVAAVAAGRSPEGVRDDP) the chain is on the extracellular side. Residues 271 to 293 (VLRRLEYFCIAWFSFEVSSRLLL) form a helical membrane-spanning segment. Over 294-304 (APSTRNFFCHP) the chain is Cytoplasmic. The helical transmembrane segment at 305-322 (LNLIDIVSVLPFYLTLLA) threads the bilayer. Over 323–337 (GVALGDQGGKEFGHL) the chain is Extracellular. The chain crosses the membrane as a helical; Voltage-sensor span at residues 338–358 (GKVVQVFRLMRIFRVLKLARH). Over 359-373 (STGLRSLGATLKHSY) the chain is Cytoplasmic. Residues 374 to 395 (REVGILLLYLAVGVSVFSGVAY) form a helical membrane-spanning segment. Topologically, residues 396 to 408 (TAEKEEDVGFNTI) are extracellular. The segment at residues 409–420 (PACWWWGTVSMT) is an intramembrane region (helical). Residues 421–426 (TVGYGD) carry the Selectivity filter motif. Residues 421–428 (TVGYGDVV) lie within the membrane without spanning it. Topologically, residues 429–435 (PVTVAGK) are extracellular. The helical transmembrane segment at 436–464 (LAASGCILGGILVVALPITIIFNKFSHFY) threads the bilayer. The Cytoplasmic portion of the chain corresponds to 465-526 (RRQKALEAAV…PSEPPHPQMY (62 aa)). The disordered stretch occupies residues 491–526 (GVSEASLETSRETSQEGRSADLESQAPSEPPHPQMY). A compositionally biased stretch (basic and acidic residues) spans 499–511 (TSRETSQEGRSAD).

This sequence belongs to the potassium channel family. S (TC 1.A.1.2) subfamily. Kv9.1/KCNS1 sub-subfamily. In terms of assembly, heterotetramer with KCNB1. Heterotetramer with KCNB2. Does not form homomultimers.

It localises to the cell membrane. Potassium channel regulatory subunit that modulate the delayed rectifier voltage-gated potassium channel activity of KCNB1 and KCNB2 by altering their kinetics, expression levels, and shifting the half-inactivation potential to more polarized values. While it does not form functional channels on its own, it can form functional heterotetrameric channels with KCNB1 and KCNB2. Each regulatory subunit has unique regulatory properties that can lead to extensive inhibition, significant changes in kinetics, and/or substantial shifts in the voltage dependencies of the inactivation process. This chain is Delayed-rectifier potassium channel regulatory subunit KCNS1, found in Pongo abelii (Sumatran orangutan).